The primary structure comprises 852 residues: Glutamine--tRNA ligase (852 aa).

The disordered stretch occupies residues 1-42 (MGAFGWEQDRGAPFSGRSPRILTRMTDAPRPTAGADAPARPP). Residues 1 to 635 (MGAFGWEQDR…ITLKDTWGKQ (635 aa)) form a glutaminyl-tRNA synthetase region. The span at 28–38 (APRPTAGADAP) shows a compositional bias: low complexity. The short motif at 74 to 84 (PDPSGYAHLGH) is the 'HIGH' region element. Aspartate 107 and tyrosine 252 together coordinate L-glutamine. The 'KMSKS' region motif lies at 308–312 (ITSKR). Disordered regions lie at residues 533–562 (EGEN…TAPV) and 632–681 (WGKQ…LTPE). Residues 636–852 (GGGTQQKAEG…LAAALKDALA (217 aa)) are gatB-like. Over residues 664 to 675 (SSSPAKAHAPKA) the composition is skewed to low complexity.

It in the N-terminal section; belongs to the class-I aminoacyl-tRNA synthetase family. In the C-terminal section; belongs to the GatB/GatE family. As to quaternary structure, monomer.

The protein resides in the cytoplasm. The catalysed reaction is tRNA(Gln) + L-glutamine + ATP = L-glutaminyl-tRNA(Gln) + AMP + diphosphate. The sequence is that of Glutamine--tRNA ligase from Deinococcus radiodurans (strain ATCC 13939 / DSM 20539 / JCM 16871 / CCUG 27074 / LMG 4051 / NBRC 15346 / NCIMB 9279 / VKM B-1422 / R1).